The sequence spans 238 residues: Ribonuclease PH (238 aa).

Residues Arg-86 and 124 to 126 (GTR) contribute to the phosphate site.

This sequence belongs to the RNase PH family. As to quaternary structure, homohexameric ring arranged as a trimer of dimers.

The enzyme catalyses tRNA(n+1) + phosphate = tRNA(n) + a ribonucleoside 5'-diphosphate. Phosphorolytic 3'-5' exoribonuclease that plays an important role in tRNA 3'-end maturation. Removes nucleotide residues following the 3'-CCA terminus of tRNAs; can also add nucleotides to the ends of RNA molecules by using nucleoside diphosphates as substrates, but this may not be physiologically important. Probably plays a role in initiation of 16S rRNA degradation (leading to ribosome degradation) during starvation. The polypeptide is Ribonuclease PH (Geobacter sulfurreducens (strain ATCC 51573 / DSM 12127 / PCA)).